Reading from the N-terminus, the 330-residue chain is Stearoyl-CoA desaturase 5 (330 aa).

Over 1–49 the chain is Cytoplasmic; that stretch reads MPGPATDAGKIPFCDAKEEIRAGLESSEGGGGPERPGARGQRQNIVWRN. Asparagine 49 lines the substrate pocket. The helical transmembrane segment at 50 to 70 threads the bilayer; sequence VVLMSLLHLGAVYSLVLIPKA. The Lumenal portion of the chain corresponds to 71-72; that stretch reads KP. The helical transmembrane segment at 73–93 threads the bilayer; it reads LTLLWAYFCFLLAALGVTAGA. Histidine 94 and histidine 99 together coordinate Fe cation. Positions 94 to 99 match the Histidine box-1 motif; the sequence is HRLWSH. At 94–193 the chain is on the cytoplasmic side; it reads HRLWSHRSYR…VVRIQRKYYK (100 aa). Asparagine 122, arginine 129, and aspartate 130 together coordinate substrate. Fe cation-binding residues include histidine 131, histidine 134, and histidine 135. The Histidine box-2 motif lies at 131–135; the sequence is HRAHH. Positions 162 and 163 each coordinate substrate. Residues 194-214 form a helical membrane-spanning segment; that stretch reads ISVVLMCFVVPTLVPWYIWGE. Residue serine 215 is a topological domain, lumenal. The chain crosses the membrane as a helical span at residues 216–238; it reads LWNSYFLASILRYTISLNISWLV. Tryptophan 236 is a binding site for substrate. Residues 239 to 330 lie on the Cytoplasmic side of the membrane; the sequence is NSAAHMYGNR…RKARTGDSSA (92 aa). The Fe cation site is built by histidine 243, histidine 272, histidine 275, and histidine 276. Residues 272 to 276 carry the Histidine box-3 motif; sequence HNYHH.

The protein belongs to the fatty acid desaturase type 1 family. In terms of assembly, may self-associate and form homodimers. Fe(2+) is required as a cofactor. In terms of tissue distribution, detected in fetal brain, and at lower levels in fetal kidney. Detected in adult brain and pancreas, and at lower levels in kidney and lung. Expressed in spiral ganglion cells and the organ of Corti of fetal cochlea.

The protein localises to the endoplasmic reticulum membrane. The enzyme catalyses octadecanoyl-CoA + 2 Fe(II)-[cytochrome b5] + O2 + 2 H(+) = (9Z)-octadecenoyl-CoA + 2 Fe(III)-[cytochrome b5] + 2 H2O. It catalyses the reaction hexadecanoyl-CoA + 2 Fe(II)-[cytochrome b5] + O2 + 2 H(+) = (9Z)-hexadecenoyl-CoA + 2 Fe(III)-[cytochrome b5] + 2 H2O. Its function is as follows. Stearoyl-CoA desaturase that utilizes O(2) and electrons from reduced cytochrome b5 to introduce the first double bond into saturated fatty acyl-CoA substrates. Catalyzes the insertion of a cis double bond at the delta-9 position into fatty acyl-CoA substrates including palmitoyl-CoA and stearoyl-CoA. Gives rise to a mixture of 16:1 and 18:1 unsaturated fatty acids. Involved in neuronal cell proliferation and differentiation through down-regulation of EGFR/AKT/MAPK and Wnt signaling pathways. In Homo sapiens (Human), this protein is Stearoyl-CoA desaturase 5 (SCD5).